Here is a 571-residue protein sequence, read N- to C-terminus: Streptolysin O (571 aa).

A signal peptide spans 1-33 (MSNKKTFKKYSRVAGLLTAALIIGNLVTANAES). The disordered stretch occupies residues 30–108 (NAESNKQNTA…KKSEEDHTEE (79 aa)). A compositionally biased stretch (low complexity) spans 37 to 48 (NTASTETTTTNE). Composition is skewed to basic and acidic residues over residues 50-68 (PKPE…KTDD) and 79-108 (APKE…HTEE). 4 beta stranded membrane-spanning segments follow: residues 260–273 (KSQI…NSKI), 280–289 (IDFKSISKGE), 358–367 (SNDVEAAFSA), and 375–387 (KTNG…LENS). A Conserved undecapeptide motif is present at residues 529-539 (ECTGLAWEWWR). The Cholesterol binding motif lies at 561 to 562 (TL).

This sequence belongs to the cholesterol-dependent cytolysin family. As to quaternary structure, homooligomeric pore complex of 35 to 50 subunits; when inserted in the host membrane.

Its subcellular location is the secreted. It localises to the host cell membrane. A cholesterol-dependent toxin that causes cytolysis by forming pores in cholesterol containing host membranes. After binding to target membranes, the protein undergoes a major conformation change, leading to its insertion in the host membrane and formation of an oligomeric pore complex. Cholesterol is required for binding to host membranes, membrane insertion and pore formation; cholesterol binding is mediated by a Thr-Leu pair in the C-terminus. Can be reversibly inactivated by oxidation. The sequence is that of Streptolysin O (slo) from Streptococcus pyogenes serotype M3 (strain ATCC BAA-595 / MGAS315).